Reading from the N-terminus, the 415-residue chain is Multidrug resistance protein MdtA (415 aa).

Positions 1-21 are cleaved as a signal peptide; that stretch reads MKGSYKSRWVIVIVVVIAAIA. Disordered regions lie at residues 32-60 and 392-415; these read SRSA…GPLA and EAQS…GARS. The segment covering 399–415 has biased composition (basic and acidic residues); that stretch reads PEEKATSREYAKKGARS.

The protein belongs to the membrane fusion protein (MFP) (TC 8.A.1) family. As to quaternary structure, part of a tripartite efflux system composed of MdtA, MdtB and MdtC.

It is found in the cell inner membrane. Its function is as follows. The MdtABC tripartite complex confers resistance against novobiocin and deoxycholate. This chain is Multidrug resistance protein MdtA, found in Escherichia coli O81 (strain ED1a).